A 268-amino-acid polypeptide reads, in one-letter code: Putative S-adenosyl-L-methionine-dependent methyltransferase MAP_0663 (268 aa).

Residues D124 and 153–154 each bind S-adenosyl-L-methionine; that span reads DL.

This sequence belongs to the UPF0677 family.

Functionally, exhibits S-adenosyl-L-methionine-dependent methyltransferase activity. This Mycolicibacterium paratuberculosis (strain ATCC BAA-968 / K-10) (Mycobacterium paratuberculosis) protein is Putative S-adenosyl-L-methionine-dependent methyltransferase MAP_0663.